The primary structure comprises 198 residues: Mediator of RNA polymerase II transcription subunit 20 (198 aa).

The protein belongs to the Mediator complex subunit 20 family. As to quaternary structure, component of the Mediator complex.

It localises to the nucleus. Component of the Mediator complex, a coactivator involved in the regulated transcription of nearly all RNA polymerase II-dependent genes. Mediator functions as a bridge to convey information from gene-specific regulatory proteins to the basal RNA polymerase II transcription machinery. Mediator is recruited to promoters by direct interactions with regulatory proteins and serves as a scaffold for the assembly of a functional preinitiation complex with RNA polymerase II and the general transcription factors. In Caenorhabditis briggsae, this protein is Mediator of RNA polymerase II transcription subunit 20 (mdt-20).